Reading from the N-terminus, the 77-residue chain is Acyl carrier protein (77 aa).

Residues 2–77 (SDVADRVKKI…DAVKFISEAS (76 aa)) form the Carrier domain. Position 37 is an O-(pantetheine 4'-phosphoryl)serine (serine 37).

This sequence belongs to the acyl carrier protein (ACP) family. Post-translationally, 4'-phosphopantetheine is transferred from CoA to a specific serine of apo-ACP by AcpS. This modification is essential for activity because fatty acids are bound in thioester linkage to the sulfhydryl of the prosthetic group.

The protein localises to the cytoplasm. It participates in lipid metabolism; fatty acid biosynthesis. Its function is as follows. Carrier of the growing fatty acid chain in fatty acid biosynthesis. This is Acyl carrier protein from Ruegeria sp. (strain TM1040) (Silicibacter sp.).